The primary structure comprises 699 residues: Elongation factor G (699 aa).

Residues Glu-8–Ile-283 form the tr-type G domain. GTP contacts are provided by residues Ala-17 to Thr-24, Asp-81 to His-85, and Asn-135 to Asp-138.

It belongs to the TRAFAC class translation factor GTPase superfamily. Classic translation factor GTPase family. EF-G/EF-2 subfamily.

The protein resides in the cytoplasm. Its function is as follows. Catalyzes the GTP-dependent ribosomal translocation step during translation elongation. During this step, the ribosome changes from the pre-translocational (PRE) to the post-translocational (POST) state as the newly formed A-site-bound peptidyl-tRNA and P-site-bound deacylated tRNA move to the P and E sites, respectively. Catalyzes the coordinated movement of the two tRNA molecules, the mRNA and conformational changes in the ribosome. The polypeptide is Elongation factor G (Rickettsia conorii (strain ATCC VR-613 / Malish 7)).